Reading from the N-terminus, the 431-residue chain is Serine--tRNA ligase (431 aa).

L-serine is bound at residue 236–238; the sequence is TAE. Position 267–269 (267–269) interacts with ATP; the sequence is RSE. Glu290 lines the L-serine pocket. 354–357 provides a ligand contact to ATP; sequence EISS. Ser389 contacts L-serine.

Belongs to the class-II aminoacyl-tRNA synthetase family. Type-1 seryl-tRNA synthetase subfamily. As to quaternary structure, homodimer. The tRNA molecule binds across the dimer.

The protein localises to the cytoplasm. It catalyses the reaction tRNA(Ser) + L-serine + ATP = L-seryl-tRNA(Ser) + AMP + diphosphate + H(+). The enzyme catalyses tRNA(Sec) + L-serine + ATP = L-seryl-tRNA(Sec) + AMP + diphosphate + H(+). It functions in the pathway aminoacyl-tRNA biosynthesis; selenocysteinyl-tRNA(Sec) biosynthesis; L-seryl-tRNA(Sec) from L-serine and tRNA(Sec): step 1/1. Functionally, catalyzes the attachment of serine to tRNA(Ser). Is also able to aminoacylate tRNA(Sec) with serine, to form the misacylated tRNA L-seryl-tRNA(Sec), which will be further converted into selenocysteinyl-tRNA(Sec). The chain is Serine--tRNA ligase from Herminiimonas arsenicoxydans.